The sequence spans 287 residues: NAD-dependent protein deacylase sir-2.3 (287 aa).

Positions 10-287 (TELCENSLKK…YRISDVLKEM (278 aa)) constitute a Deacetylase sirtuin-type domain. Residues 35-55 (GAGISTESGIPDYRSKDVGLY) and 116-119 (QNVD) contribute to the NAD(+) site. The active-site Proton acceptor is histidine 134. Residues cysteine 142, cysteine 145, cysteine 196, and cysteine 199 each contribute to the Zn(2+) site. NAD(+)-binding positions include 236 to 238 (GTS), 262 to 264 (NIG), and isoleucine 280.

It belongs to the sirtuin family. Class II subfamily. In terms of assembly, interacts with pyc-1, pcca-1 and mccc-1. Requires Zn(2+) as cofactor. In terms of tissue distribution, ubiquitously expressed with high expression in the pharynx, body wall muscles and gonad. Strong expression in a subset of non-neuronal cells in the head.

The protein localises to the mitochondrion matrix. Its subcellular location is the mitochondrion. The enzyme catalyses N(6)-acetyl-L-lysyl-[protein] + NAD(+) + H2O = 2''-O-acetyl-ADP-D-ribose + nicotinamide + L-lysyl-[protein]. NAD-dependent protein deacylase. Catalyzes the NAD-dependent hydrolysis of acyl groups from lysine residues. Plays a role in oxidative stress resistance. Might promote neuronal cell death under ischemic conditions and cell death in touch neurons induced by mec-4 channel hyperactivation, possibly downstream of the insulin-like receptor daf-2. Might attenuate the reactive oxygen species (ROS) scavenging system, that eliminates ROS in ischemic conditions, under dietary deprivation and when glycolysis is blocked. The sequence is that of NAD-dependent protein deacylase sir-2.3 (sir-2.3) from Caenorhabditis elegans.